The following is a 679-amino-acid chain: Glycine--tRNA ligase beta subunit (679 aa).

Belongs to the class-II aminoacyl-tRNA synthetase family. Tetramer of two alpha and two beta subunits.

The protein resides in the cytoplasm. It catalyses the reaction tRNA(Gly) + glycine + ATP = glycyl-tRNA(Gly) + AMP + diphosphate. The chain is Glycine--tRNA ligase beta subunit from Streptococcus gordonii (strain Challis / ATCC 35105 / BCRC 15272 / CH1 / DL1 / V288).